The primary structure comprises 101 residues: Apolipoprotein C-II (101 aa).

Residues 1-22 (MGTRFLLALFLVLLVLGFEVQG) form the signal peptide. Residues 66-74 (AVDEKLRDM) form a lipid binding region. The lipoprotein lipase cofactor stretch occupies residues 78-101 (STAAVSTYAGIFTDQVLSMLRGEE).

Belongs to the apolipoprotein C2 family. Post-translationally, proapolipoprotein C-II is synthesized as a sialic acid containing glycoprotein which is subsequently desialylated prior to its proteolytic processing. Proapolipoprotein C-II, the major form found in plasma undergoes proteolytic cleavage of its N-terminal hexapeptide to generate apolipoprotein C-II, which occurs as the minor form in plasma.

It localises to the secreted. Its function is as follows. Component of chylomicrons, very low-density lipoproteins (VLDL), low-density lipoproteins (LDL), and high-density lipoproteins (HDL) in plasma. Plays an important role in lipoprotein metabolism as an activator of lipoprotein lipase. Both proapolipoprotein C-II and apolipoprotein C-II can activate lipoprotein lipase. The protein is Apolipoprotein C-II (APOC2) of Saimiri boliviensis boliviensis (Bolivian squirrel monkey).